The primary structure comprises 152 residues: UPF0178 protein KPN78578_03210 (152 aa).

It belongs to the UPF0178 family.

This Klebsiella pneumoniae subsp. pneumoniae (strain ATCC 700721 / MGH 78578) protein is UPF0178 protein KPN78578_03210.